The sequence spans 211 residues: ATP-dependent Clp protease proteolytic subunit 2 (211 aa).

The Nucleophile role is filled by S106. The active site involves H131.

Belongs to the peptidase S14 family. As to quaternary structure, fourteen ClpP subunits assemble into 2 heptameric rings which stack back to back to give a disk-like structure with a central cavity, resembling the structure of eukaryotic proteasomes.

It is found in the cytoplasm. It catalyses the reaction Hydrolysis of proteins to small peptides in the presence of ATP and magnesium. alpha-casein is the usual test substrate. In the absence of ATP, only oligopeptides shorter than five residues are hydrolyzed (such as succinyl-Leu-Tyr-|-NHMec, and Leu-Tyr-Leu-|-Tyr-Trp, in which cleavage of the -Tyr-|-Leu- and -Tyr-|-Trp bonds also occurs).. In terms of biological role, cleaves peptides in various proteins in a process that requires ATP hydrolysis. Has a chymotrypsin-like activity. Plays a major role in the degradation of misfolded proteins. The sequence is that of ATP-dependent Clp protease proteolytic subunit 2 from Bradyrhizobium diazoefficiens (strain JCM 10833 / BCRC 13528 / IAM 13628 / NBRC 14792 / USDA 110).